A 300-amino-acid polypeptide reads, in one-letter code: Porphobilinogen deaminase (300 aa).

Cysteine 242 bears the S-(dipyrrolylmethanemethyl)cysteine mark.

It belongs to the HMBS family. Monomer. The cofactor is dipyrromethane.

It carries out the reaction 4 porphobilinogen + H2O = hydroxymethylbilane + 4 NH4(+). It functions in the pathway porphyrin-containing compound metabolism; protoporphyrin-IX biosynthesis; coproporphyrinogen-III from 5-aminolevulinate: step 2/4. Functionally, tetrapolymerization of the monopyrrole PBG into the hydroxymethylbilane pre-uroporphyrinogen in several discrete steps. In Blochmanniella pennsylvanica (strain BPEN), this protein is Porphobilinogen deaminase.